We begin with the raw amino-acid sequence, 240 residues long: MASARNLLLLSSSRLHGHGYLEHARGQLEDLFKSANVKTVLFVPYALRDHDKYTATVRDALQPWGFNVEGLHTKPDREQALREAQAIFVGGGNTFVLLRSLYEMKLLDPIRELVLQRGLPYVGSSAGTNVATRSIHTTNDMPVAYPPSFEALALVPFNINPHYLDPEAGSRHKGETRDERLEEFVAYHGLPVLGLREGTSVRVQGEKAILLGDRNAKLFKADGGTEELAPLADLTFLLQK.

Catalysis depends on charge relay system residues serine 125, aspartate 140, and histidine 162.

Belongs to the peptidase S51 family.

Its subcellular location is the cytoplasm. The enzyme catalyses Dipeptidase E catalyzes the hydrolysis of dipeptides Asp-|-Xaa. It does not act on peptides with N-terminal Glu, Asn or Gln, nor does it cleave isoaspartyl peptides.. In terms of biological role, hydrolyzes dipeptides containing N-terminal aspartate residues. This is Probable alpha-aspartyl dipeptidase from Drosophila melanogaster (Fruit fly).